A 397-amino-acid chain; its full sequence is Tryptophan synthase beta chain (397 aa).

Position 89 is an N6-(pyridoxal phosphate)lysine (lysine 89).

This sequence belongs to the TrpB family. As to quaternary structure, tetramer of two alpha and two beta chains. The cofactor is pyridoxal 5'-phosphate.

The enzyme catalyses (1S,2R)-1-C-(indol-3-yl)glycerol 3-phosphate + L-serine = D-glyceraldehyde 3-phosphate + L-tryptophan + H2O. It participates in amino-acid biosynthesis; L-tryptophan biosynthesis; L-tryptophan from chorismate: step 5/5. The beta subunit is responsible for the synthesis of L-tryptophan from indole and L-serine. In Leptospira interrogans serogroup Icterohaemorrhagiae serovar copenhageni (strain Fiocruz L1-130), this protein is Tryptophan synthase beta chain.